A 201-amino-acid polypeptide reads, in one-letter code: Pectinesterase inhibitor 7 (201 aa).

The first 24 residues, 1-24 (MARNFELSLILFVLYLSTAAIVMA), serve as a signal peptide directing secretion. Cystine bridges form between C42–C51 and C108–C159.

It belongs to the PMEI family. As to quaternary structure, binds reversibly to PME3 to inhibit its activity; the stability of the PME3-PMEI7 complex and the inhibition of the pectin methylesterase (PME) activity is pH-dependent, based on protonation status of amino-acids at the complex interface. Accumulates in etiolated hypocotyls (at protein level).

Its subcellular location is the secreted. The protein resides in the extracellular space. The protein localises to the apoplast. It localises to the cell wall. Functionally, pectin methylesterase (PME) inhibitor that can target PME3 in a pH-dependent manner, mainly in slightly acidic conditions (pH 6.0 and 5.0) but not at pH 7.0; this processus relies on changes in the protonation of amino acids involved in intermolecular and intramolecular interactions. Regulates homogalacturonan methylesterification during plant development. This is Pectinesterase inhibitor 7 from Arabidopsis thaliana (Mouse-ear cress).